A 222-amino-acid chain; its full sequence is Large ribosomal subunit protein uL3 (222 aa).

Residues 129 to 150 (HNFRGLPDSHGTERKHRSPGSI) form a disordered region.

This sequence belongs to the universal ribosomal protein uL3 family. Part of the 50S ribosomal subunit. Forms a cluster with proteins L14 and L19.

In terms of biological role, one of the primary rRNA binding proteins, it binds directly near the 3'-end of the 23S rRNA, where it nucleates assembly of the 50S subunit. The polypeptide is Large ribosomal subunit protein uL3 (Acidothermus cellulolyticus (strain ATCC 43068 / DSM 8971 / 11B)).